We begin with the raw amino-acid sequence, 208 residues long: Interleukin-6 (208 aa).

The first 29 residues, 1 to 29, serve as a signal peptide directing secretion; sequence MNSRFTSAFTPFAVSLGLLLVMTSAFPTP. An N-linked (GlcNAc...) asparagine glycan is attached at N38. A disulfide bridge connects residues C72 and C78. S81 bears the Phosphoserine mark. Cysteines 101 and 111 form a disulfide.

It belongs to the IL-6 superfamily. Component of a hexamer of two molecules each of IL6, IL6R and IL6ST; first binds to IL6R to associate with the signaling subunit IL6ST. Interacts with IL6R (via the N-terminal ectodomain); this interaction may be affected by IL6R-binding with SORL1, hence decreasing IL6 cis signaling. Interacts with SORL1 (via the N-terminal ectodomain); this interaction leads to IL6 internalization and lysosomal degradation. May form a trimeric complex with the soluble SORL1 ectodomain and soluble IL6R receptor; this interaction might stabilize circulating IL6, hence promoting IL6 trans signaling.

The protein localises to the secreted. Its function is as follows. Cytokine with a wide variety of biological functions in immunity, tissue regeneration, and metabolism. Binds to IL6R, then the complex associates to the signaling subunit IL6ST/gp130 to trigger the intracellular IL6-signaling pathway. The interaction with the membrane-bound IL6R and IL6ST stimulates 'classic signaling', whereas the binding of IL6 and soluble IL6R to IL6ST stimulates 'trans-signaling'. Alternatively, 'cluster signaling' occurs when membrane-bound IL6:IL6R complexes on transmitter cells activate IL6ST receptors on neighboring receiver cells. In terms of biological role, IL6 is a potent inducer of the acute phase response. Rapid production of IL6 contributes to host defense during infection and tissue injury, but excessive IL6 synthesis is involved in disease pathology. In the innate immune response, is synthesized by myeloid cells, such as macrophages and dendritic cells, upon recognition of pathogens through toll-like receptors (TLRs) at the site of infection or tissue injury. In the adaptive immune response, is required for the differentiation of B cells into immunoglobulin-secreting cells. Plays a major role in the differentiation of CD4(+) T cell subsets. Essential factor for the development of T follicular helper (Tfh) cells that are required for the induction of germinal-center formation. Required to drive naive CD4(+) T cells to the Th17 lineage. Also required for proliferation of myeloma cells and the survival of plasmablast cells. Acts as an essential factor in bone homeostasis and on vessels directly or indirectly by induction of VEGF, resulting in increased angiogenesis activity and vascular permeability. Induces, through 'trans-signaling' and synergistically with IL1B and TNF, the production of VEGF. Involved in metabolic controls, is discharged into the bloodstream after muscle contraction increasing lipolysis and improving insulin resistance. 'Trans-signaling' in central nervous system also regulates energy and glucose homeostasis. Mediates, through GLP-1, crosstalk between insulin-sensitive tissues, intestinal L cells and pancreatic islets to adapt to changes in insulin demand. Also acts as a myokine. Plays a protective role during liver injury, being required for maintenance of tissue regeneration. Also has a pivotal role in iron metabolism by regulating HAMP/hepcidin expression upon inflammation or bacterial infection. Through activation of IL6ST-YAP-NOTCH pathway, induces inflammation-induced epithelial regeneration. In Bos taurus (Bovine), this protein is Interleukin-6 (IL6).